A 341-amino-acid chain; its full sequence is Biotin synthase (341 aa).

The region spanning 39–263 is the Radical SAM core domain; sequence EQVQLCTLLS…VAVARITMPL (225 aa). [4Fe-4S] cluster is bound by residues Cys54, Cys58, and Cys61. [2Fe-2S] cluster is bound by residues Cys98, Cys129, Cys189, and Arg267.

The protein belongs to the radical SAM superfamily. Biotin synthase family. In terms of assembly, homodimer. [4Fe-4S] cluster is required as a cofactor. [2Fe-2S] cluster serves as cofactor.

The catalysed reaction is (4R,5S)-dethiobiotin + (sulfur carrier)-SH + 2 reduced [2Fe-2S]-[ferredoxin] + 2 S-adenosyl-L-methionine = (sulfur carrier)-H + biotin + 2 5'-deoxyadenosine + 2 L-methionine + 2 oxidized [2Fe-2S]-[ferredoxin]. It participates in cofactor biosynthesis; biotin biosynthesis; biotin from 7,8-diaminononanoate: step 2/2. Its function is as follows. Catalyzes the conversion of dethiobiotin (DTB) to biotin by the insertion of a sulfur atom into dethiobiotin via a radical-based mechanism. This Erythrobacter litoralis (strain HTCC2594) protein is Biotin synthase.